The following is a 130-amino-acid chain: MENMYQYGTGRRKSSSARVFLKTGTGNITINNRKLNNYFSRRTARLIILQPIEFVNMSKKCDLYITVKGGGISGQVGAIRHGISRALIKYDSSFRNELRKLGFITRDSRQVERKKVGFRKARKRPQFSKR.

This sequence belongs to the universal ribosomal protein uS9 family.

This is Small ribosomal subunit protein uS9 from Buchnera aphidicola subsp. Baizongia pistaciae (strain Bp).